The following is a 332-amino-acid chain: Holliday junction branch migration complex subunit RuvB (332 aa).

The large ATPase domain (RuvB-L) stretch occupies residues 1–181 (MSRILDNELM…FGITGHMEYY (181 aa)). Residues Leu-20, Arg-21, Gly-62, Lys-65, Thr-66, Thr-67, 128 to 130 (EDF), Arg-171, Tyr-181, and Arg-218 contribute to the ATP site. Thr-66 is a Mg(2+) binding site. Residues 182–252 (EAGDLTEIVE…ITDQALSMLD (71 aa)) are small ATPAse domain (RuvB-S). A head domain (RuvB-H) region spans residues 255-332 (QEGLDYVDQK…EHLGYEYMKE (78 aa)). DNA is bound by residues Arg-291, Arg-310, Arg-312, and Arg-315.

Belongs to the RuvB family. Homohexamer. Forms an RuvA(8)-RuvB(12)-Holliday junction (HJ) complex. HJ DNA is sandwiched between 2 RuvA tetramers; dsDNA enters through RuvA and exits via RuvB. An RuvB hexamer assembles on each DNA strand where it exits the tetramer. Each RuvB hexamer is contacted by two RuvA subunits (via domain III) on 2 adjacent RuvB subunits; this complex drives branch migration. In the full resolvosome a probable DNA-RuvA(4)-RuvB(12)-RuvC(2) complex forms which resolves the HJ.

The protein resides in the cytoplasm. The catalysed reaction is ATP + H2O = ADP + phosphate + H(+). In terms of biological role, the RuvA-RuvB-RuvC complex processes Holliday junction (HJ) DNA during genetic recombination and DNA repair, while the RuvA-RuvB complex plays an important role in the rescue of blocked DNA replication forks via replication fork reversal (RFR). RuvA specifically binds to HJ cruciform DNA, conferring on it an open structure. The RuvB hexamer acts as an ATP-dependent pump, pulling dsDNA into and through the RuvAB complex. RuvB forms 2 homohexamers on either side of HJ DNA bound by 1 or 2 RuvA tetramers; 4 subunits per hexamer contact DNA at a time. Coordinated motions by a converter formed by DNA-disengaged RuvB subunits stimulates ATP hydrolysis and nucleotide exchange. Immobilization of the converter enables RuvB to convert the ATP-contained energy into a lever motion, pulling 2 nucleotides of DNA out of the RuvA tetramer per ATP hydrolyzed, thus driving DNA branch migration. The RuvB motors rotate together with the DNA substrate, which together with the progressing nucleotide cycle form the mechanistic basis for DNA recombination by continuous HJ branch migration. Branch migration allows RuvC to scan DNA until it finds its consensus sequence, where it cleaves and resolves cruciform DNA. In Streptococcus sanguinis (strain SK36), this protein is Holliday junction branch migration complex subunit RuvB.